We begin with the raw amino-acid sequence, 743 residues long: Protein STB5 (743 aa).

Residues 22–49 (CARCRKLKKKCGKQIPTCANCDKNGAHC) constitute a DNA-binding region (zn(2)-C6 fungal-type). Disordered stretches follow at residues 81-100 (VGKS…PLSA) and 155-249 (NSNP…YANN). Composition is skewed to polar residues over residues 85–99 (PLST…SPLS) and 155–198 (NSNP…SPLI). Residues 213–238 (NNNRNTSNGDNGSNVNHDNNNGSTNT) are compositionally biased toward low complexity. Positions 239-249 (PQLSLTPYANN) are enriched in polar residues.

It localises to the nucleus. In terms of biological role, binds to SIN3. This is Protein STB5 (STB5) from Saccharomyces cerevisiae (strain ATCC 204508 / S288c) (Baker's yeast).